The primary structure comprises 76 residues: Small ribosomal subunit protein bS18 (76 aa).

This sequence belongs to the bacterial ribosomal protein bS18 family. In terms of assembly, part of the 30S ribosomal subunit. Forms a tight heterodimer with protein bS6.

In terms of biological role, binds as a heterodimer with protein bS6 to the central domain of the 16S rRNA, where it helps stabilize the platform of the 30S subunit. The sequence is that of Small ribosomal subunit protein bS18 from Brevibacillus brevis (strain 47 / JCM 6285 / NBRC 100599).